The sequence spans 349 residues: MTKYIGYVGTYTKGGSEGIYSFELDTEKKALSEPKLAAKLGNPTYVATNKNNTILYSIEKADGQGGVAAYQIDKNSGELTFLNHQLIDGPSPCHVSVDDQNQFVLTANYHSGKVHVFPVQEDGSLQSPVSEAAHTGKGPHERQEKPHTHYAGFTPEHNYVVAVDLGIDKLYTYKLKDGVLTESGSHSFAPGAGPRHIAFHPKEKYAYVMTELSNEVIALEYNPTAGEFREIQVVSAIPDDFTDNSQGSAIHVTQDGRFVYVANRGHDSIAVFEVNQYSGELAFVERVSTEGNWPRDFVFDPTEGFLVASNEETGNLVLFERDKETGRLTLLPSTVSVPYPVCVKFLHQV.

The interval 125-151 is disordered; it reads LQSPVSEAAHTGKGPHERQEKPHTHYA. Basic and acidic residues predominate over residues 138 to 147; sequence GPHERQEKPH.

Belongs to the cycloisomerase 2 family.

It carries out the reaction 6-phospho-D-glucono-1,5-lactone + H2O = 6-phospho-D-gluconate + H(+). Its pathway is carbohydrate degradation; pentose phosphate pathway; D-ribulose 5-phosphate from D-glucose 6-phosphate (oxidative stage): step 2/3. Its function is as follows. Catalyzes the hydrolysis of 6-phosphogluconolactone to 6-phosphogluconate. The polypeptide is 6-phosphogluconolactonase (pgl) (Bacillus subtilis (strain 168)).